The primary structure comprises 649 residues: Mediator of RNA polymerase II transcription subunit 17 (649 aa).

A disordered region spans residues 51–79 (QGSGSEEEEAAGPDGDAPDWGGAGADQDD).

This sequence belongs to the Mediator complex subunit 17 family. Component of the Mediator complex, which is composed of MED1, MED4, MED6, MED7, MED8, MED9, MED10, MED11, MED12, MED13, MED13L, MED14, MED15, MED16, MED17, MED18, MED19, MED20, MED21, MED22, MED23, MED24, MED25, MED26, MED27, MED29, MED30, MED31, CCNC, CDK8 and CDC2L6/CDK11. The MED12, MED13, CCNC and CDK8 subunits form a distinct module termed the CDK8 module. Mediator containing the CDK8 module is less active than Mediator lacking this module in supporting transcriptional activation. Individual preparations of the Mediator complex lacking one or more distinct subunits have been variously termed ARC, CRSP, DRIP, PC2, SMCC and TRAP. Interacts with STAT2. Interacts with GATA1 and PPARG.

The protein localises to the nucleus. In terms of biological role, component of the Mediator complex, a coactivator involved in the regulated transcription of nearly all RNA polymerase II-dependent genes. Mediator functions as a bridge to convey information from gene-specific regulatory proteins to the basal RNA polymerase II transcription machinery. Mediator is recruited to promoters by direct interactions with regulatory proteins and serves as a scaffold for the assembly of a functional preinitiation complex with RNA polymerase II and the general transcription factors. The sequence is that of Mediator of RNA polymerase II transcription subunit 17 (Med17) from Mus musculus (Mouse).